A 1356-amino-acid polypeptide reads, in one-letter code: DNA-directed RNA polymerase subunit beta (1356 aa).

Belongs to the RNA polymerase beta chain family. In terms of assembly, the RNAP catalytic core consists of 2 alpha, 1 beta, 1 beta' and 1 omega subunit. When a sigma factor is associated with the core the holoenzyme is formed, which can initiate transcription.

It carries out the reaction RNA(n) + a ribonucleoside 5'-triphosphate = RNA(n+1) + diphosphate. Its function is as follows. DNA-dependent RNA polymerase catalyzes the transcription of DNA into RNA using the four ribonucleoside triphosphates as substrates. The sequence is that of DNA-directed RNA polymerase subunit beta from Phenylobacterium zucineum (strain HLK1).